Consider the following 520-residue polypeptide: GMP synthase [glutamine-hydrolyzing] (520 aa).

One can recognise a Glutamine amidotransferase type-1 domain in the interval Ala-3–Asp-200. The active-site Nucleophile is Cys-84. Residues His-175 and Glu-177 contribute to the active site. The 186-residue stretch at Trp-201–Gln-386 folds into the GMPS ATP-PPase domain. ATP is bound at residue Ser-228–Ser-234.

As to quaternary structure, homodimer.

It catalyses the reaction XMP + L-glutamine + ATP + H2O = GMP + L-glutamate + AMP + diphosphate + 2 H(+). The protein operates within purine metabolism; GMP biosynthesis; GMP from XMP (L-Gln route): step 1/1. In terms of biological role, catalyzes the synthesis of GMP from XMP. The sequence is that of GMP synthase [glutamine-hydrolyzing] from Wolbachia pipientis wMel.